The primary structure comprises 825 residues: Exocyst complex component SEC10a (825 aa).

Residues arginine 244–serine 266 are a coiled coil.

The protein belongs to the SEC10 family. The exocyst complex is composed of SEC3, SEC5, SEC6, SEC8, SEC10, EXO70A1 and EXO84B. Interacts with EXO84B. Binds to EXO70E2. Binds directly to B1L. In terms of tissue distribution, expressed in seedlings, roots, leaves and flowers.

The protein resides in the cytoplasm. It is found in the cytosol. It localises to the secreted. Its subcellular location is the extracellular exosome. Its function is as follows. Component of the exocyst complex involved in the docking of exocytic vesicles with fusion sites on the plasma membrane during regulated or polarized secretion. Involved in polarized cell growth and organ morphogenesis. During cytokinesis, involved in cell plate initiation, cell plate maturation and formation of new primary cell wall. The polypeptide is Exocyst complex component SEC10a (Arabidopsis thaliana (Mouse-ear cress)).